A 368-amino-acid chain; its full sequence is Protein HGH1 homolog (368 aa).

It belongs to the HGH1 family.

This Drosophila pseudoobscura pseudoobscura (Fruit fly) protein is Protein HGH1 homolog.